Here is a 594-residue protein sequence, read N- to C-terminus: Beta-fructofuranosidase, insoluble isoenzyme CWINV3 (594 aa).

A signal peptide spans 1-28; that stretch reads MAKLNRSNIGLSLLLSMFLANFITDLEA. Residues 50 to 53, glutamine 69, tryptophan 77, and 113 to 114 contribute to the substrate site; these read WMND and WS. Aspartate 53 is a catalytic residue. Residue asparagine 147 is glycosylated (N-linked (GlcNAc...) asparagine). Residue 179–180 participates in substrate binding; the sequence is RD. N-linked (GlcNAc...) asparagine glycosylation is present at asparagine 217. Residue glutamate 235 participates in substrate binding. 2 N-linked (GlcNAc...) asparagine glycosylation sites follow: asparagine 297 and asparagine 329. Cysteine 428 and cysteine 480 are oxidised to a cystine.

This sequence belongs to the glycosyl hydrolase 32 family. Expressed in seedlings, leaves, flowers, and seeds.

It is found in the secreted. The protein resides in the extracellular space. The protein localises to the apoplast. Its subcellular location is the cell wall. It carries out the reaction Hydrolysis of terminal, non-reducing (2-&gt;1)- and (2-&gt;6)-linked beta-D-fructofuranose residues in fructans.. Functionally, 6-fructan exohydrolase that can use phlein, levan, neokestose, levanbiose, 6-kestose, and 1-kestose as substrates. In Arabidopsis thaliana (Mouse-ear cress), this protein is Beta-fructofuranosidase, insoluble isoenzyme CWINV3 (CWINV3).